The following is a 356-amino-acid chain: Protein MGF 360-3L (356 aa).

An ANK repeat occupies 61-93 (KLNTALVLAVKENNEDLIMLFTEWGANINYGLL).

The protein belongs to the asfivirus MGF 360 family.

Functionally, plays a role in virus cell tropism, and may be required for efficient virus replication in macrophages. This African swine fever virus (isolate Warthog/Namibia/Wart80/1980) (ASFV) protein is Protein MGF 360-3L.